The following is a 281-amino-acid chain: NADPH-dependent 7-cyano-7-deazaguanine reductase (281 aa).

Substrate is bound at residue 87-89; it reads IES. 89 to 90 is an NADPH binding site; it reads SK. The Thioimide intermediate role is filled by C188. The active-site Proton donor is the D195. Residue 227 to 228 participates in substrate binding; sequence HE. Position 256 to 257 (256 to 257) interacts with NADPH; the sequence is RG. Positions 261–281 are disordered; sequence INPYRSTEQDKPAHNNRMARQ.

The protein belongs to the GTP cyclohydrolase I family. QueF type 2 subfamily. In terms of assembly, homodimer.

Its subcellular location is the cytoplasm. The enzyme catalyses 7-aminomethyl-7-carbaguanine + 2 NADP(+) = 7-cyano-7-deazaguanine + 2 NADPH + 3 H(+). It participates in tRNA modification; tRNA-queuosine biosynthesis. Catalyzes the NADPH-dependent reduction of 7-cyano-7-deazaguanine (preQ0) to 7-aminomethyl-7-deazaguanine (preQ1). In Vibrio campbellii (strain ATCC BAA-1116), this protein is NADPH-dependent 7-cyano-7-deazaguanine reductase.